Reading from the N-terminus, the 119-residue chain is Large ribosomal subunit protein bL20 (119 aa).

It belongs to the bacterial ribosomal protein bL20 family.

In terms of biological role, binds directly to 23S ribosomal RNA and is necessary for the in vitro assembly process of the 50S ribosomal subunit. It is not involved in the protein synthesizing functions of that subunit. This Alkalilimnicola ehrlichii (strain ATCC BAA-1101 / DSM 17681 / MLHE-1) protein is Large ribosomal subunit protein bL20.